The following is a 345-amino-acid chain: Uroporphyrinogen decarboxylase (345 aa).

Residues 27 to 31 (RQAGR), phenylalanine 46, aspartate 76, tyrosine 152, serine 207, and histidine 321 contribute to the substrate site.

Belongs to the uroporphyrinogen decarboxylase family. In terms of assembly, homodimer.

Its subcellular location is the cytoplasm. The catalysed reaction is uroporphyrinogen III + 4 H(+) = coproporphyrinogen III + 4 CO2. It participates in porphyrin-containing compound metabolism; protoporphyrin-IX biosynthesis; coproporphyrinogen-III from 5-aminolevulinate: step 4/4. Catalyzes the decarboxylation of four acetate groups of uroporphyrinogen-III to yield coproporphyrinogen-III. This is Uroporphyrinogen decarboxylase from Staphylococcus aureus (strain MRSA252).